A 289-amino-acid chain; its full sequence is NAD kinase (289 aa).

The active-site Proton acceptor is the Asp-68. NAD(+) is bound by residues 68 to 69 (DG), Lys-73, 142 to 143 (ND), Arg-153, Asp-172, 183 to 188 (TAYSLS), and Gln-243.

It belongs to the NAD kinase family. A divalent metal cation is required as a cofactor.

It localises to the cytoplasm. It carries out the reaction NAD(+) + ATP = ADP + NADP(+) + H(+). Involved in the regulation of the intracellular balance of NAD and NADP, and is a key enzyme in the biosynthesis of NADP. Catalyzes specifically the phosphorylation on 2'-hydroxyl of the adenosine moiety of NAD to yield NADP. The polypeptide is NAD kinase (Acetivibrio thermocellus (strain ATCC 27405 / DSM 1237 / JCM 9322 / NBRC 103400 / NCIMB 10682 / NRRL B-4536 / VPI 7372) (Clostridium thermocellum)).